A 505-amino-acid polypeptide reads, in one-letter code: Amidophosphoribosyltransferase (505 aa).

C2 acts as the Nucleophile in catalysis. The Glutamine amidotransferase type-2 domain maps to 2–235 (CGIVGIVSQS…AGEAVYVTFD (234 aa)). T306, D368, and D369 together coordinate Mg(2+). The disordered stretch occupies residues 484 to 505 (RNDNAKKKREKQASNLEIYNEQ). The segment covering 496 to 505 (ASNLEIYNEQ) has biased composition (polar residues).

In the C-terminal section; belongs to the purine/pyrimidine phosphoribosyltransferase family. Mg(2+) serves as cofactor.

The enzyme catalyses 5-phospho-beta-D-ribosylamine + L-glutamate + diphosphate = 5-phospho-alpha-D-ribose 1-diphosphate + L-glutamine + H2O. Its pathway is purine metabolism; IMP biosynthesis via de novo pathway; N(1)-(5-phospho-D-ribosyl)glycinamide from 5-phospho-alpha-D-ribose 1-diphosphate: step 1/2. Its function is as follows. Catalyzes the formation of phosphoribosylamine from phosphoribosylpyrophosphate (PRPP) and glutamine. The sequence is that of Amidophosphoribosyltransferase from Haemophilus influenzae (strain ATCC 51907 / DSM 11121 / KW20 / Rd).